We begin with the raw amino-acid sequence, 222 residues long: Probable nicotinate-nucleotide adenylyltransferase (222 aa).

This sequence belongs to the NadD family.

It catalyses the reaction nicotinate beta-D-ribonucleotide + ATP + H(+) = deamido-NAD(+) + diphosphate. The protein operates within cofactor biosynthesis; NAD(+) biosynthesis; deamido-NAD(+) from nicotinate D-ribonucleotide: step 1/1. Catalyzes the reversible adenylation of nicotinate mononucleotide (NaMN) to nicotinic acid adenine dinucleotide (NaAD). The sequence is that of Probable nicotinate-nucleotide adenylyltransferase from Xylella fastidiosa (strain M12).